We begin with the raw amino-acid sequence, 539 residues long: Chaperonin GroEL (539 aa).

Residues 29-32, 86-90, glycine 413, 476-478, and aspartate 492 contribute to the ATP site; these read TIGP, DGTTT, and NAA.

The protein belongs to the chaperonin (HSP60) family. Forms a cylinder of 14 subunits composed of two heptameric rings stacked back-to-back. Interacts with the co-chaperonin GroES.

Its subcellular location is the cytoplasm. The catalysed reaction is ATP + H2O + a folded polypeptide = ADP + phosphate + an unfolded polypeptide.. Together with its co-chaperonin GroES, plays an essential role in assisting protein folding. The GroEL-GroES system forms a nano-cage that allows encapsulation of the non-native substrate proteins and provides a physical environment optimized to promote and accelerate protein folding. In Pediococcus pentosaceus (strain ATCC 25745 / CCUG 21536 / LMG 10740 / 183-1w), this protein is Chaperonin GroEL.